A 478-amino-acid polypeptide reads, in one-letter code: UDP-glycosyltransferase 90A1 (478 aa).

UDP-alpha-D-glucose-binding positions include threonine 289, 343–345 (VDQ), 360–368 (HCGWNSAQE), and 382–385 (MAEQ).

It belongs to the UDP-glycosyltransferase family.

This Arabidopsis thaliana (Mouse-ear cress) protein is UDP-glycosyltransferase 90A1 (UGT90A1).